We begin with the raw amino-acid sequence, 502 residues long: MSVRVRIAPSPTGDPHVGTAYMALFNMIFARHYNGTFILRIEDTDRARSRPEYEENIYSALKWANIQWDEGPDIGGAYGPYRQSERFDIYKQYAEELLSKGKAYKCFCTAAELDEMRELSAKQGGRQGYDRRCRHLTPDEIIEREQAELSYVIRLKVPLNGECVYEDAIKKRMTFPWADIDDQVLLKSDGFPTYHLANVVDDYLMKISHVIRGDEWMSSTPKHILLYESFGWTPPTFLHMPLLLGKDGKKLSKRKNPTSIFFYRDSGYLSEAFINFLTLMGYSMTGDQEIYSLDDIIREFDYKRIGVSGAIFDVQKLDWVNQQYLIKNIPVEQLWDRIKEWSFNDEFMQRLMPLCHSRIKTFGDFMDLFNFLFINHLHYNDAIFVVKDLSKEQICYLIQSLIWRLDELENWNGTGVNQASREIAEIFGVNHKKIVMPILFASLMSKTQGPPLFDSVNLLGKDRTRARLLKAMEYLGGISNKKMASLKKAWQEKSGQPLMIKD.

A 'HIGH' region motif is present at residues 9 to 19; it reads PSPTGDPHVGT. Positions 106, 108, 133, and 135 each coordinate Zn(2+). The 'KMSKS' region signature appears at 250 to 254; sequence KLSKR. Lys253 contacts ATP.

This sequence belongs to the class-I aminoacyl-tRNA synthetase family. Glutamate--tRNA ligase type 1 subfamily. In terms of assembly, monomer. Requires Zn(2+) as cofactor.

It localises to the cytoplasm. The enzyme catalyses tRNA(Glu) + L-glutamate + ATP = L-glutamyl-tRNA(Glu) + AMP + diphosphate. Catalyzes the attachment of glutamate to tRNA(Glu) in a two-step reaction: glutamate is first activated by ATP to form Glu-AMP and then transferred to the acceptor end of tRNA(Glu). The chain is Glutamate--tRNA ligase from Protochlamydia amoebophila (strain UWE25).